A 315-amino-acid polypeptide reads, in one-letter code: 4-hydroxy-3-methylbut-2-enyl diphosphate reductase (315 aa).

Cys12 serves as a coordination point for [4Fe-4S] cluster. Residues His41 and His74 each coordinate (2E)-4-hydroxy-3-methylbut-2-enyl diphosphate. Dimethylallyl diphosphate contacts are provided by His41 and His74. Isopentenyl diphosphate-binding residues include His41 and His74. Cys96 is a [4Fe-4S] cluster binding site. His124 is a binding site for (2E)-4-hydroxy-3-methylbut-2-enyl diphosphate. His124 is a binding site for dimethylallyl diphosphate. Position 124 (His124) interacts with isopentenyl diphosphate. Glu126 serves as the catalytic Proton donor. Thr167 lines the (2E)-4-hydroxy-3-methylbut-2-enyl diphosphate pocket. [4Fe-4S] cluster is bound at residue Cys197. 4 residues coordinate (2E)-4-hydroxy-3-methylbut-2-enyl diphosphate: Ser225, Ser226, Asn227, and Ser269. Dimethylallyl diphosphate contacts are provided by Ser225, Ser226, Asn227, and Ser269. Residues Ser225, Ser226, Asn227, and Ser269 each coordinate isopentenyl diphosphate.

The protein belongs to the IspH family. Homodimer. It depends on [4Fe-4S] cluster as a cofactor.

It catalyses the reaction isopentenyl diphosphate + 2 oxidized [2Fe-2S]-[ferredoxin] + H2O = (2E)-4-hydroxy-3-methylbut-2-enyl diphosphate + 2 reduced [2Fe-2S]-[ferredoxin] + 2 H(+). The catalysed reaction is dimethylallyl diphosphate + 2 oxidized [2Fe-2S]-[ferredoxin] + H2O = (2E)-4-hydroxy-3-methylbut-2-enyl diphosphate + 2 reduced [2Fe-2S]-[ferredoxin] + 2 H(+). The protein operates within isoprenoid biosynthesis; dimethylallyl diphosphate biosynthesis; dimethylallyl diphosphate from (2E)-4-hydroxy-3-methylbutenyl diphosphate: step 1/1. Its pathway is isoprenoid biosynthesis; isopentenyl diphosphate biosynthesis via DXP pathway; isopentenyl diphosphate from 1-deoxy-D-xylulose 5-phosphate: step 6/6. Functionally, catalyzes the conversion of 1-hydroxy-2-methyl-2-(E)-butenyl 4-diphosphate (HMBPP) into a mixture of isopentenyl diphosphate (IPP) and dimethylallyl diphosphate (DMAPP). Acts in the terminal step of the DOXP/MEP pathway for isoprenoid precursor biosynthesis. The chain is 4-hydroxy-3-methylbut-2-enyl diphosphate reductase from Wigglesworthia glossinidia brevipalpis.